Here is a 715-residue protein sequence, read N- to C-terminus: Metastasis-associated protein MTA1 (715 aa).

A BAH domain is found at 1 to 164 (MAANMYRVGD…PQQKTLLADK (164 aa)). Positions 165–276 (GEIRVGNRYQ…KAISALVPQG (112 aa)) constitute an ELM2 domain. A Glycyl lysine isopeptide (Lys-Gly) (interchain with G-Cter in ubiquitin) cross-link involves residue K182. The 53-residue stretch at 283–335 (DEMEEWSASEANLFEEALEKYGKDFTDIQQDFLPWKSLTSIIEYYYMWKTTDR) folds into the SANT domain. S386 carries the phosphoserine modification. The GATA-type; atypical zinc finger occupies 393–420 (CESCYTTQSYQWYSWGPPNMQCRLCASC). A disordered region spans residues 437-460 (DGERPGPNRNNMSPHGIPARSSGS). A Phosphoserine modification is found at S449. Residue K509 forms a Glycyl lysine isopeptide (Lys-Gly) (interchain with G-Cter in SUMO2 and SUMO3) linkage. Position 522 is a phosphoserine (S522). Over residues 542 to 552 (ETHPRPPKPDP) the composition is skewed to basic and acidic residues. Residues 542-590 (ETHPRPPKPDPVKSSSSVLSSLTPAKSAPVINNGSPTILGKRSYEQHNG) form a disordered region. The SH3-binding motif lies at 545 to 552 (PRPPKPDP). K549 participates in a covalent cross-link: Glycyl lysine isopeptide (Lys-Gly) (interchain with G-Cter in SUMO2). The segment covering 553 to 565 (VKSSSSVLSSLTP) has biased composition (low complexity). T564 carries the post-translational modification Phosphothreonine. The residue at position 576 (S576) is a Phosphoserine. T578 carries the post-translational modification Phosphothreonine. K626 is modified (N6-acetyllysine; alternate). A Glycyl lysine isopeptide (Lys-Gly) (interchain with G-Cter in ubiquitin); alternate cross-link involves residue K626. S639 carries the post-translational modification Phosphoserine. Residues 656 to 686 (DVFYMATEETRKIRKLLSSSETKRAARRPYK) are interaction with RBBP4. The segment at 673–715 (SSSETKRAARRPYKPIALRQSQALPLRPPPPAPVNDEPIVIED) is disordered. The SH3-binding signature appears at 696–705 (LPLRPPPPAP). The SUMO interaction motif 1 (SIM); crucial for efficient sumoylation motif lies at 711–715 (IVIED).

It belongs to the metastasis-associated protein family. As to quaternary structure, component of the nucleosome remodeling and deacetylase (NuRD) repressor complex, composed of core proteins MTA1, MTA2, MTA3, RBBP4, RBBP7, HDAC1, HDAC2, MBD2, MBD3, and peripherally associated proteins CDK2AP1, CDK2AP2, GATAD2A, GATAD2B, CHD3, CHD4 and CHD5. The exact stoichiometry of the NuRD complex is unknown, and some subunits such as MBD2 and MBD3, GATAD2A and GATAD2B, and CHD3, CHD4 and CHD5 define mutually exclusive NuRD complexes. Interacts with RBBP4; the interaction is direct. Interacts with BMAL1. Interacts with CLOCK. Interacts with COP1. Interacts with CSNK1G2 in the cytoplasm. Interacts with EP300. Interacts with HDAC2. Interacts with ITGB3BP/CENPR. Interacts with MBD3L2. Interacts with MDM2. Interacts with NACC2. Interacts with p53/TP53. Interacts with PIAS1. Interacts with PIAS3. Interacts with PIAS4. Interacts with PWWP2A. Interacts with PWWP2B. Interacts with SENP1. Interacts with SENP2. Interacts with SIX3; facilitates the binding of SIX3 to the core DNA motif of SIX3 promoter. Interacts with SUMO1. Interacts with SUMO2. Interacts with TFCP2L1; which is indispensable for TFCP2L1-mediated self-renewal-promoting effect and endoderm-inhibiting action. Interacts with TFAP2C. Interacts with TPR. Interacts with UBE2I/UBC9. Phosphorylation by CSNK1G2/CK1 triggered by estrogen enhances corepression of estrogen receptor (ER). In terms of processing, acetylation is essential for its transcriptional coactivator activity. Post-translationally, sumoylation positively regulates its transcriptional corepressor activity but does not affect the protein stability. Sumoylated preferentially by SUMO2 or SUMO3 than SUMO1. Sumoylation is enhanced by PIAS1/3/4 and preferentially sumoylated by SUMO2 in the presence of PIAS1/3/4. Desumoylated by SENP1. Ubiquitinated by COP1, which leads to proteasomal degradation. As to expression, widely expressed but not in skeletal muscle. Highly expressed in the brain, liver, kidney and cardiac muscle and in mammary tumors.

It localises to the nucleus. The protein resides in the nucleus envelope. It is found in the cytoplasm. Its subcellular location is the cytoskeleton. Transcriptional coregulator which can act as both a transcriptional corepressor and coactivator. Acts as a component of the histone deacetylase NuRD complex which participates in the remodeling of chromatin. In the NuRD complex, regulates transcription of its targets by modifying the acetylation status of the target chromatin and cofactor accessibility to the target DNA. In conjunction with other components of NuRD, acts as a transcriptional corepressor of BRCA1, ESR1, TFF1 and CDKN1A. Acts as a transcriptional coactivator of BCAS3, PAX5 and SUMO2, independent of the NuRD complex. Stimulates the expression of WNT1 by inhibiting the expression of its transcriptional corepressor SIX3. Regulates p53-dependent and -independent DNA repair processes following genotoxic stress. Regulates the stability and function of p53/TP53 by inhibiting its ubiquitination by COP1 and MDM2 thereby regulating the p53-dependent DNA repair. Plays a role in the regulation of the circadian clock and is essential for the generation and maintenance of circadian rhythms under constant light and for normal entrainment of behavior to light-dark (LD) cycles. Positively regulates the CLOCK-BMAL1 heterodimer mediated transcriptional activation of its own transcription and the transcription of CRY1. Regulates deacetylation of BMAL1 by regulating SIRT1 expression, resulting in derepressing CRY1-mediated transcription repression. With Tfcp2l1, promotes establishment and maintenance of pluripotency in embryonic stem cells (ESCs) and inhibits endoderm differentiation. This Mus musculus (Mouse) protein is Metastasis-associated protein MTA1 (Mta1).